The sequence spans 340 residues: Ribosomal RNA small subunit methyltransferase C (340 aa).

This sequence belongs to the methyltransferase superfamily. RsmC family. Monomer.

It is found in the cytoplasm. The enzyme catalyses guanosine(1207) in 16S rRNA + S-adenosyl-L-methionine = N(2)-methylguanosine(1207) in 16S rRNA + S-adenosyl-L-homocysteine + H(+). In terms of biological role, specifically methylates the guanine in position 1207 of 16S rRNA in the 30S particle. The chain is Ribosomal RNA small subunit methyltransferase C from Vibrio vulnificus (strain CMCP6).